Reading from the N-terminus, the 314-residue chain is Homoserine kinase (314 aa).

Proline 95 to alanine 105 contacts ATP.

The protein belongs to the GHMP kinase family. Homoserine kinase subfamily.

The protein localises to the cytoplasm. It carries out the reaction L-homoserine + ATP = O-phospho-L-homoserine + ADP + H(+). It participates in amino-acid biosynthesis; L-threonine biosynthesis; L-threonine from L-aspartate: step 4/5. Its function is as follows. Catalyzes the ATP-dependent phosphorylation of L-homoserine to L-homoserine phosphate. The protein is Homoserine kinase of Mycobacterium sp. (strain JLS).